A 323-amino-acid chain; its full sequence is Probable pectate lyase A (323 aa).

Residues 1-20 (MTNFKWIVAAAGLLSGQVLA) form the signal peptide. N95 carries N-linked (GlcNAc...) asparagine glycosylation. 3 residues coordinate Ca(2+): D136, D165, and D169. Residue R222 is part of the active site.

It belongs to the polysaccharide lyase 1 family. Requires Ca(2+) as cofactor.

It localises to the secreted. It catalyses the reaction Eliminative cleavage of (1-&gt;4)-alpha-D-galacturonan to give oligosaccharides with 4-deoxy-alpha-D-galact-4-enuronosyl groups at their non-reducing ends.. In terms of biological role, pectinolytic enzyme consist of four classes of enzymes: pectin lyase, polygalacturonase, pectin methylesterase and rhamnogalacturonase. Among pectinolytic enzymes, pectin lyase is the most important in depolymerization of pectin, since it cleaves internal glycosidic bonds of highly methylated pectins. Favors pectate, the anion, over pectin, the methyl ester. The polypeptide is Probable pectate lyase A (plyA) (Aspergillus niger (strain ATCC MYA-4892 / CBS 513.88 / FGSC A1513)).